The following is a 79-amino-acid chain: Small ribosomal subunit protein bS18 (79 aa).

The protein belongs to the bacterial ribosomal protein bS18 family. In terms of assembly, part of the 30S ribosomal subunit. Forms a tight heterodimer with protein bS6.

Functionally, binds as a heterodimer with protein bS6 to the central domain of the 16S rRNA, where it helps stabilize the platform of the 30S subunit. This is Small ribosomal subunit protein bS18 from Streptococcus suis (strain 98HAH33).